Here is a 137-residue protein sequence, read N- to C-terminus: Holo-[acyl-carrier-protein] synthase (137 aa).

Residues Asp8 and Glu57 each coordinate Mg(2+).

The protein belongs to the P-Pant transferase superfamily. AcpS family. Mg(2+) is required as a cofactor.

It localises to the cytoplasm. It catalyses the reaction apo-[ACP] + CoA = holo-[ACP] + adenosine 3',5'-bisphosphate + H(+). Functionally, transfers the 4'-phosphopantetheine moiety from coenzyme A to a Ser of acyl-carrier-protein. The polypeptide is Holo-[acyl-carrier-protein] synthase (Hyphomonas neptunium (strain ATCC 15444)).